A 78-amino-acid chain; its full sequence is Large ribosomal subunit protein bL31 (78 aa).

This sequence belongs to the bacterial ribosomal protein bL31 family. Type A subfamily. As to quaternary structure, part of the 50S ribosomal subunit.

Its function is as follows. Binds the 23S rRNA. The polypeptide is Large ribosomal subunit protein bL31 (rpmE) (Rickettsia typhi (strain ATCC VR-144 / Wilmington)).